Reading from the N-terminus, the 61-residue chain is MSQKKVTVRQVGSPIGRKPEQRQTLQGLGLNKIGRTSELEDTPAVRGMIRKVSHLVEVVGE.

The segment at 1-20 is disordered; the sequence is MSQKKVTVRQVGSPIGRKPE.

It belongs to the universal ribosomal protein uL30 family. As to quaternary structure, part of the 50S ribosomal subunit.

This Hyphomonas neptunium (strain ATCC 15444) protein is Large ribosomal subunit protein uL30.